We begin with the raw amino-acid sequence, 156 residues long: Ribosomal RNA large subunit methyltransferase H (156 aa).

S-adenosyl-L-methionine is bound by residues L73, G104, and 123-128 (LSSLTL).

It belongs to the RNA methyltransferase RlmH family. In terms of assembly, homodimer.

It is found in the cytoplasm. It carries out the reaction pseudouridine(1915) in 23S rRNA + S-adenosyl-L-methionine = N(3)-methylpseudouridine(1915) in 23S rRNA + S-adenosyl-L-homocysteine + H(+). Functionally, specifically methylates the pseudouridine at position 1915 (m3Psi1915) in 23S rRNA. This is Ribosomal RNA large subunit methyltransferase H from Ralstonia pickettii (strain 12J).